The sequence spans 270 residues: uncharacterized protein (270 aa).

A disordered region spans residues 166 to 186; it reads RRKENNISNESVSEEPESPLF.

This is an uncharacterized protein from Ostreid herpesvirus 1 (isolate France) (OsHV-1).